We begin with the raw amino-acid sequence, 412 residues long: Alpha-2,8-sialyltransferase 8E (412 aa).

The Cytoplasmic segment spans residues 1–16; sequence MRYADPSANRDLLGNR. A helical; Signal-anchor for type II membrane protein transmembrane segment spans residues 17-37; sequence TLLFIFICAFALVTLLQQILY. Residues 38–412 lie on the Lumenal side of the membrane; that stretch reads SKSYIKRGFQ…RVHTGTCNCC (375 aa). Asparagine 58, asparagine 64, asparagine 73, and asparagine 92 each carry an N-linked (GlcNAc...) asparagine glycan. 2 disulfides stabilise this stretch: cysteine 200-cysteine 349 and cysteine 214-cysteine 409. Substrate-binding positions include asparagine 228 and 250 to 252; that span reads NPS. N-linked (GlcNAc...) asparagine glycosylation occurs at asparagine 277. 336–338 contacts substrate; it reads STG. Residue histidine 384 is the Proton donor/acceptor of the active site.

The protein belongs to the glycosyltransferase 29 family. Highly expressed in brain. Expressed at low levels in other tissues, including liver, testis, lung, placenta and spleen.

It is found in the golgi apparatus membrane. It catalyses the reaction a ganglioside GT1b (d18:1(4E)) + CMP-N-acetyl-beta-neuraminate = a ganglioside GQ1b (d18:1(4E)) + CMP + H(+). It carries out the reaction a ganglioside GD3 (d18:1(4E)) + CMP-N-acetyl-beta-neuraminate = a ganglioside GT3 (d18:1(4E)) + CMP + H(+). The enzyme catalyses a ganglioside GD1a (d18:1(4E)) + CMP-N-acetyl-beta-neuraminate = a ganglioside GT1a (d18:1(4E)) + CMP + H(+). The catalysed reaction is a ganglioside GM1b (d18:1(4E)) + CMP-N-acetyl-beta-neuraminate = a ganglioside GD1c (d18:1(4E)) + CMP + H(+). It catalyses the reaction a ganglioside GQ1c (d18:1(4E)) + CMP-N-acetyl-beta-neuraminate = a ganglioside GP1c (d18:1(4E)) + CMP + H(+). It participates in protein modification; protein glycosylation. Involved in the synthesis of gangliosides GD1c, GT1a, GQ1b, GP1c and GT3 from GD1a, GT1b, GM1b and GD3 respectively. The protein is Alpha-2,8-sialyltransferase 8E of Mus musculus (Mouse).